A 503-amino-acid polypeptide reads, in one-letter code: ATP synthase subunit alpha (503 aa).

An ATP-binding site is contributed by 170-177; the sequence is GDRQTGKT.

Belongs to the ATPase alpha/beta chains family. In terms of assembly, F-type ATPases have 2 components, CF(1) - the catalytic core - and CF(0) - the membrane proton channel. CF(1) has five subunits: alpha(3), beta(3), gamma(1), delta(1), epsilon(1). CF(0) has three main subunits: a(1), b(2) and c(9-12). The alpha and beta chains form an alternating ring which encloses part of the gamma chain. CF(1) is attached to CF(0) by a central stalk formed by the gamma and epsilon chains, while a peripheral stalk is formed by the delta and b chains.

It localises to the cell inner membrane. It carries out the reaction ATP + H2O + 4 H(+)(in) = ADP + phosphate + 5 H(+)(out). In terms of biological role, produces ATP from ADP in the presence of a proton gradient across the membrane. The alpha chain is a regulatory subunit. The polypeptide is ATP synthase subunit alpha (Pseudothermotoga lettingae (strain ATCC BAA-301 / DSM 14385 / NBRC 107922 / TMO) (Thermotoga lettingae)).